A 3174-amino-acid polypeptide reads, in one-letter code: Probable polyketide synthase 15 (3174 aa).

The Ketosynthase family 3 (KS3) domain maps to 23-474 (NDEIAIVGIG…GSNCCLILSQ (452 aa)). Residues Cys-194, His-342, and His-397 each act as for beta-ketoacyl synthase activity in the active site. 2 coiled-coil regions span residues 472 to 509 (LSQF…QYDN) and 574 to 604 (EFNK…RVQT). Residues 578–599 (QKQSQKEKEKEKEREGEEKEQL) show a composition bias toward basic and acidic residues. Positions 578-601 (QKQSQKEKEKEKEREGEEKEQLNR) are disordered. The interval 707-740 (GIEASFIVGHSLGEIPAAYCSGMITLDTLCYLIY) is acyl/malonyl transferase. Ser-717 (for acyl/malonyl transferase activity) is an active-site residue. An N-terminal hotdog fold region spans residues 1034-1156 (IDILGLSNYD…ANFQLLNNNN (123 aa)). Positions 1034–1332 (IDILGLSNYD…CKSLKIVKNP (299 aa)) constitute a PKS/mFAS DH domain. Catalysis depends on His-1068, which acts as the Proton acceptor; for dehydratase activity. The tract at residues 1182–1332 (NKTKISRIDL…CKSLKIVKNP (151 aa)) is C-terminal hotdog fold. The active-site Proton donor; for dehydratase activity is the Asp-1241. Residues 1758-1793 (LEININNNNNNNNNNNNNNNNNNNNNNNNNNYEDNV) adopt a coiled-coil conformation. The region spanning 2653–2730 (VDSLNIKDIF…LVIKIIITAI (78 aa)) is the Carrier domain. O-(pantetheine 4'-phosphoryl)serine is present on Ser-2690.

Requires pantetheine 4'-phosphate as cofactor.

In terms of biological role, probable polyketide synthase. The chain is Probable polyketide synthase 15 (pks15) from Dictyostelium discoideum (Social amoeba).